A 430-amino-acid polypeptide reads, in one-letter code: Asparagine--tRNA ligase (430 aa).

Belongs to the class-II aminoacyl-tRNA synthetase family. As to quaternary structure, homodimer.

It is found in the cytoplasm. It catalyses the reaction tRNA(Asn) + L-asparagine + ATP = L-asparaginyl-tRNA(Asn) + AMP + diphosphate + H(+). The sequence is that of Asparagine--tRNA ligase from Staphylococcus aureus (strain USA300).